The sequence spans 127 residues: uncharacterized protein (127 aa).

The next 3 helical transmembrane spans lie at 16 to 36 (AVIG…CYVI), 59 to 79 (LVGA…SFLF), and 100 to 120 (IIGF…GGVI).

The protein localises to the cell membrane. This is an uncharacterized protein from Methanocaldococcus jannaschii (strain ATCC 43067 / DSM 2661 / JAL-1 / JCM 10045 / NBRC 100440) (Methanococcus jannaschii).